The sequence spans 194 residues: MKRERLMSINKEKAEAAIYQFLEAIGENPNREGLLDTPKRVAKMYAEMFLGLGKDPKEEFTAVFKEQHEDVVIVKDISFYSICEHHLVPFYGKAHIAYLPSDGRVTGLSKLARAVEVASKRPQLQERLTSQIADALVEALNPKGTLVMVEAEHMCMTMRGIKKPGSKTITTTARGLYKESRAERQEVISLMTKD.

Residues Cys83, His86, and Cys155 each contribute to the Zn(2+) site.

It belongs to the GTP cyclohydrolase I family. Toroid-shaped homodecamer, composed of two pentamers of five dimers.

It catalyses the reaction GTP + H2O = 7,8-dihydroneopterin 3'-triphosphate + formate + H(+). It functions in the pathway cofactor biosynthesis; 7,8-dihydroneopterin triphosphate biosynthesis; 7,8-dihydroneopterin triphosphate from GTP: step 1/1. This Streptococcus pyogenes serotype M1 protein is GTP cyclohydrolase 1 (folE).